A 683-amino-acid chain; its full sequence is MALSKRELDELKPWIEKTVERVLGFSEPTVVTAALNCVGKGMDKKKAADHLKPFLDDSTLRFVDKLFEAVEEGRSSRHSKSSSDRSRKRDLKEVFGDDSEISKESSGVKKRRIPRFEEVEEEPEVIPGPPSESPGMLTKLQIKQMMEAATRQIEERKKQLSFISPPTPQPKTPSSSQPERLPIGNTIQPSQAATFMNDAIEKARKAAELQASIQAQLALKPGLIGNANMVGLANLHAMGIAPPKVELKDQTKPTPLILDEQGRTVDATGKEIELTHRMPTLKANIRAVKREQFKQQLKEKPSEDMESNTFFDPRVSIAPSQRQRRTFKFHDKGKFEKIAQRLRTKAQLEKLQAEISQAARKTGIHTSTRLALIAPKKELKEGDIPEIEWWDSYIIPNGFDLTEENPKREDYFGITNLVEHPAQLNPPVDNDTPVTLGVYLTKKEQKKLRRQTRREAQKELQEKVRLGLMPPPEPKVRISNLMRVLGTEAVQDPTKVEAHVRAQMAKRQKAHEEANAARKLTAEQRKVKKIKKLKEDISQGVHISVYRVRNLSNPAKKFKIEANAGQLYLTGVVVLHKDVNVVVVEGGPKAQKKFKRLMLHRIKWDEQTSNTKGDDDEESDEEAVKKTNKCVLVWEGTAKDRSFGEMKFKQCPTENMAREHFKKHGAEHYWDLALSESVLESTD.

The 87-residue stretch at 1 to 87 folds into the PWI domain; the sequence is MALSKRELDE…HSKSSSDRSR (87 aa). The span at 73–107 shows a compositional bias: basic and acidic residues; it reads GRSSRHSKSSSDRSRKRDLKEVFGDDSEISKESSG. The segment at 73–135 is disordered; the sequence is GRSSRHSKSS…IPGPPSESPG (63 aa). K139 is covalently cross-linked (Glycyl lysine isopeptide (Lys-Gly) (interchain with G-Cter in SUMO2)). Residues 153–183 form a disordered region; that stretch reads IEERKKQLSFISPPTPQPKTPSSSQPERLPI. S164 is subject to Phosphoserine. Residue T167 is modified to Phosphothreonine. Glycyl lysine isopeptide (Lys-Gly) (interchain with G-Cter in SUMO2) cross-links involve residues K244 and K252. The interval 416-550 is mediates interaction with SART3; that stretch reads NLVEHPAQLN…VHISVYRVRN (135 aa). S619 carries the phosphoserine modification.

In terms of assembly, component of the precatalytic spliceosome (spliceosome B complex). Component of the U4/U6-U5 tri-snRNP complex, a building block of the precatalytic spliceosome (spliceosome B complex). The U4/U6-U5 tri-snRNP complex is composed of the U4, U6 and U5 snRNAs and at least PRPF3, PRPF4, PRPF6, PRPF8, PRPF31, SNRNP200, TXNL4A, SNRNP40, SNRPB, SNRPD1, SNRPD2, SNRPD3, SNRPE, SNRPF, SNRPG, DDX23, CD2BP2, PPIH, SNU13, EFTUD2, SART1 and USP39, plus LSM2, LSM3, LSM4, LSM5, LSM6, LSM7 and LSM8. Interacts directly with PRPF4. Part of a heteromeric complex containing PPIH, PRPF3 and PRPF4 that is stable in the absence of RNA. Interacts with SART3; the interaction is direct and recruits the deubiquitinase USP4 to PRPF3. Interacts with PRPF19. Interacts ('Lys-63'-linked polyubiquitinated) with PRPF8 (via the MPN (JAB/Mov34) domain); may stabilize the U4/U6-U5 tri-snRNP complex. Interacts with ERCC6. In terms of processing, ubiquitinated. Undergoes 'Lys-63'-linked polyubiquitination by PRPF19 and deubiquitination by USP4. 'Lys-63'-linked ubiquitination increases the affinity for PRPF8 and may regulate the assembly of the U4/U6-U5 tri-snRNP complex.

The protein resides in the nucleus. It is found in the nucleus speckle. In terms of biological role, plays a role in pre-mRNA splicing as component of the U4/U6-U5 tri-snRNP complex that is involved in spliceosome assembly, and as component of the precatalytic spliceosome (spliceosome B complex). The polypeptide is U4/U6 small nuclear ribonucleoprotein Prp3 (PRPF3) (Bos taurus (Bovine)).